The following is a 106-amino-acid chain: Large ribosomal subunit protein uL24 (106 aa).

Belongs to the universal ribosomal protein uL24 family. Part of the 50S ribosomal subunit.

Its function is as follows. One of two assembly initiator proteins, it binds directly to the 5'-end of the 23S rRNA, where it nucleates assembly of the 50S subunit. Functionally, one of the proteins that surrounds the polypeptide exit tunnel on the outside of the subunit. The protein is Large ribosomal subunit protein uL24 of Blochmanniella floridana.